The chain runs to 328 residues: Dof zinc finger protein PBF (328 aa).

Residues 33-56 (RDPKQTRAMPQIGGSGERKPRPQL) form a disordered region. A Dof-type zinc finger spans residues 60–114 (LKCPRCDSNNTKFCYYNNYSMSQPRYFCKACRRYWTHGGTLRNVPIGGGCRKNKH). Zn(2+) is bound by residues cysteine 62, cysteine 65, cysteine 87, and cysteine 90. Disordered stretches follow at residues 124-144 (TSSS…ASSS) and 306-328 (WNKH…NKGQ).

As to quaternary structure, interacts with the bZIP transcription factor Opaque-2/O2. As to expression, seed endosperm.

It is found in the nucleus. Transcription factor that binds specifically to a 5'-AA[AG]G-3' consensus core sequence. May enhance the DNA binding of the bZIP transcription factor Opaque-2 to O2 binding site elements. The chain is Dof zinc finger protein PBF (PBF) from Zea mays (Maize).